Here is a 287-residue protein sequence, read N- to C-terminus: Probable endonuclease 4 (287 aa).

Positions 69, 109, 144, 178, 181, 215, 228, 230, and 260 each coordinate Zn(2+).

Belongs to the AP endonuclease 2 family. It depends on Zn(2+) as a cofactor.

It catalyses the reaction Endonucleolytic cleavage to 5'-phosphooligonucleotide end-products.. In terms of biological role, endonuclease IV plays a role in DNA repair. It cleaves phosphodiester bonds at apurinic or apyrimidinic (AP) sites, generating a 3'-hydroxyl group and a 5'-terminal sugar phosphate. This Thermotoga sp. (strain RQ2) protein is Probable endonuclease 4.